We begin with the raw amino-acid sequence, 429 residues long: Histidine--tRNA ligase (429 aa).

This sequence belongs to the class-II aminoacyl-tRNA synthetase family. As to quaternary structure, homodimer.

The protein resides in the cytoplasm. It carries out the reaction tRNA(His) + L-histidine + ATP = L-histidyl-tRNA(His) + AMP + diphosphate + H(+). In Pseudomonas aeruginosa (strain LESB58), this protein is Histidine--tRNA ligase.